Consider the following 156-residue polypeptide: Large ribosomal subunit protein uL15 (156 aa).

Residues 29–48 (CGKGKTSGRGHKGQKARSGV) form a disordered region. A compositionally biased stretch (basic residues) spans 34-43 (TSGRGHKGQK).

Belongs to the universal ribosomal protein uL15 family. As to quaternary structure, part of the 50S ribosomal subunit.

Functionally, binds to the 23S rRNA. In Ehrlichia chaffeensis (strain ATCC CRL-10679 / Arkansas), this protein is Large ribosomal subunit protein uL15.